Here is a 108-residue protein sequence, read N- to C-terminus: MNKFIILAIFALAVGAMADYPKPAYHAPPPPPPHHLHAHPAPAPVVHTYPVHAPHAKCGANLLVGCAPSVAHVPCVPLPGHAPAHGYGHAPAPHYRAPESDSFDQFEE.

The signal sequence occupies residues 1–18 (MNKFIILAIFALAVGAMA). In terms of domain architecture, VM spans 52–88 (HAPHAKCGANLLVGCAPSVAHVPCVPLPGHAPAHGYG). The interval 87–108 (YGHAPAPHYRAPESDSFDQFEE) is disordered.

It belongs to the vitelline membrane family. Expressed in the middle and posterior regions of the follicle cells.

The protein resides in the secreted. The polypeptide is Vitelline membrane protein 15a-1 (Aedes aegypti (Yellowfever mosquito)).